A 242-amino-acid polypeptide reads, in one-letter code: MSKSRLTVFSFVRRFLLRLMVVLAVFWGGGIALFSVAPVPFSAVMVERQVSAWLHGNFRYVAHSDWVSMDQISPWMGLAVIAAEDQKFPEHWGFDVASIEKALAHNERNENRIRGASTISQQTAKNLFLWDGRSWVRKGLEAGLTLGIETVWSKKRILTVYLNIAEFGDGVFGVEAAAQRYFHKPASKLTRSEAALLAAVLPNPLRFKVSAPSGYVRSRQAWILRQMYQLGGEPFMQQHQLD.

A helical transmembrane segment spans residues 19-39 (LMVVLAVFWGGGIALFSVAPV).

Belongs to the glycosyltransferase 51 family.

Its subcellular location is the cell inner membrane. The catalysed reaction is [GlcNAc-(1-&gt;4)-Mur2Ac(oyl-L-Ala-gamma-D-Glu-L-Lys-D-Ala-D-Ala)](n)-di-trans,octa-cis-undecaprenyl diphosphate + beta-D-GlcNAc-(1-&gt;4)-Mur2Ac(oyl-L-Ala-gamma-D-Glu-L-Lys-D-Ala-D-Ala)-di-trans,octa-cis-undecaprenyl diphosphate = [GlcNAc-(1-&gt;4)-Mur2Ac(oyl-L-Ala-gamma-D-Glu-L-Lys-D-Ala-D-Ala)](n+1)-di-trans,octa-cis-undecaprenyl diphosphate + di-trans,octa-cis-undecaprenyl diphosphate + H(+). It participates in cell wall biogenesis; peptidoglycan biosynthesis. Its function is as follows. Peptidoglycan polymerase that catalyzes glycan chain elongation from lipid-linked precursors. This chain is Biosynthetic peptidoglycan transglycosylase, found in Shigella dysenteriae serotype 1 (strain Sd197).